A 169-amino-acid polypeptide reads, in one-letter code: uncharacterized protein (169 aa).

N-linked (GlcNAc...) asparagine; by host glycosylation is found at asparagine 13, asparagine 29, asparagine 39, and asparagine 48. The short motif at 109-111 is the Cell attachment site element; it reads RGD. A glycan (N-linked (GlcNAc...) asparagine; by host) is linked at asparagine 135. A helical transmembrane segment spans residues 145–165; it reads IYHMAIVYILIMYQIYILSLI.

It is found in the membrane. This is an uncharacterized protein from Acanthamoeba polyphaga (Amoeba).